A 664-amino-acid polypeptide reads, in one-letter code: UvrABC system protein B (664 aa).

The Helicase ATP-binding domain maps to 25 to 182 (KSFGEGKNKI…RKFLHIQYAR (158 aa)). 38 to 45 (GVTGSGKT) serves as a coordination point for ATP. The short motif at 91–114 (YYDYYQPEAYVPSSDTFIEKDMSM) is the Beta-hairpin element. A Helicase C-terminal domain is found at 429-595 (QIEDLLNEIR…TIQKEIHDIL (167 aa)). The UVR domain occupies 625-660 (DKLREALKREMLRYANDMDFEKAAMFRDKMLALGPD).

The protein belongs to the UvrB family. As to quaternary structure, forms a heterotetramer with UvrA during the search for lesions. Interacts with UvrC in an incision complex.

The protein resides in the cytoplasm. In terms of biological role, the UvrABC repair system catalyzes the recognition and processing of DNA lesions. A damage recognition complex composed of 2 UvrA and 2 UvrB subunits scans DNA for abnormalities. Upon binding of the UvrA(2)B(2) complex to a putative damaged site, the DNA wraps around one UvrB monomer. DNA wrap is dependent on ATP binding by UvrB and probably causes local melting of the DNA helix, facilitating insertion of UvrB beta-hairpin between the DNA strands. Then UvrB probes one DNA strand for the presence of a lesion. If a lesion is found the UvrA subunits dissociate and the UvrB-DNA preincision complex is formed. This complex is subsequently bound by UvrC and the second UvrB is released. If no lesion is found, the DNA wraps around the other UvrB subunit that will check the other stand for damage. This chain is UvrABC system protein B, found in Leptospira biflexa serovar Patoc (strain Patoc 1 / Ames).